Reading from the N-terminus, the 440-residue chain is GTPase Der (440 aa).

2 EngA-type G domains span residues 5–167 (ATVA…PEQE) and 178–353 (IMLS…KEHS). Residues 11–18 (GRPNVGKS), 58–62 (DTGGI), 120–123 (NKSE), 184–191 (GRPNVGKS), 231–235 (DTAGL), and 296–299 (NKWD) contribute to the GTP site. Residues 354 to 438 (KRITTADVNR…PIRILERVKQ (85 aa)) form the KH-like domain.

This sequence belongs to the TRAFAC class TrmE-Era-EngA-EngB-Septin-like GTPase superfamily. EngA (Der) GTPase family. As to quaternary structure, associates with the 50S ribosomal subunit.

Functionally, GTPase that plays an essential role in the late steps of ribosome biogenesis. This is GTPase Der from Natranaerobius thermophilus (strain ATCC BAA-1301 / DSM 18059 / JW/NM-WN-LF).